The following is a 55-amino-acid chain: Neurotoxin B-II (55 aa).

Proline 10 is subject to Hydroxyproline. Disulfide bonds link cysteine 12/cysteine 48, cysteine 16/cysteine 52, cysteine 23/cysteine 41, and cysteine 26/cysteine 37.

The protein belongs to the worm B-toxin family.

The protein resides in the secreted. This toxin increases the excitability of nerves by delaying the inactivation of the voltage-gated sodium channel (Nav). Only acts on some crustacean. Neurotoxin B-II is less abundant, but 15-fold more toxic than neurotoxin B-VI. In Cerebratulus lacteus (Milky ribbon worm), this protein is Neurotoxin B-II.